Reading from the N-terminus, the 144-residue chain is Cytochrome c oxidase subunit 4 isoform 1, mitochondrial (144 aa).

The Mitochondrial matrix portion of the chain corresponds to 1–73 (SVVKSEDYAL…SFAEMNRGSN (73 aa)). Lys4 bears the N6-acetyllysine; alternate mark. Position 4 is an N6-succinyllysine; alternate (Lys4). Phosphoserine occurs at positions 31 and 33. An N6-acetyllysine; alternate modification is found at Lys35. An N6-succinyllysine; alternate modification is found at Lys35. Lys42 carries the post-translational modification N6-acetyllysine. A helical membrane pass occupies residues 74–99 (EWKTVVGAAMFFIGFTAILIILEKRY). The Mitochondrial intermembrane portion of the chain corresponds to 100–144 (VYGPLPHTFDKEWVAMQTKRMLDLKVNPVDGLASKWDYDKKEWKK).

It belongs to the cytochrome c oxidase IV family. As to quaternary structure, component of the cytochrome c oxidase (complex IV, CIV), a multisubunit enzyme composed of 14 subunits. The complex is composed of a catalytic core of 3 subunits MT-CO1, MT-CO2 and MT-CO3, encoded in the mitochondrial DNA, and 11 supernumerary subunits COX4I, COX5A, COX5B, COX6A, COX6B, COX6C, COX7A, COX7B, COX7C, COX8 and NDUFA4, which are encoded in the nuclear genome. The complex exists as a monomer or a dimer and forms supercomplexes (SCs) in the inner mitochondrial membrane with NADH-ubiquinone oxidoreductase (complex I, CI) and ubiquinol-cytochrome c oxidoreductase (cytochrome b-c1 complex, complex III, CIII), resulting in different assemblies (supercomplex SCI(1)III(2)IV(1) and megacomplex MCI(2)III(2)IV(2)). Interacts with PHB2; the interaction decreases in absence of SPHK2. Interacts with AFG1L. Interacts with ABCB7; this interaction allows the regulation of cellular iron homeostasis and cellular reactive oxygen species (ROS) levels in cardiomyocytes. Interacts with FLVCR2; this interaction occurs in the absence of heme and is disrupted upon heme binding. Interacts with IRGC.

The protein resides in the mitochondrion inner membrane. It functions in the pathway energy metabolism; oxidative phosphorylation. In terms of biological role, component of the cytochrome c oxidase, the last enzyme in the mitochondrial electron transport chain which drives oxidative phosphorylation. The respiratory chain contains 3 multisubunit complexes succinate dehydrogenase (complex II, CII), ubiquinol-cytochrome c oxidoreductase (cytochrome b-c1 complex, complex III, CIII) and cytochrome c oxidase (complex IV, CIV), that cooperate to transfer electrons derived from NADH and succinate to molecular oxygen, creating an electrochemical gradient over the inner membrane that drives transmembrane transport and the ATP synthase. Cytochrome c oxidase is the component of the respiratory chain that catalyzes the reduction of oxygen to water. Electrons originating from reduced cytochrome c in the intermembrane space (IMS) are transferred via the dinuclear copper A center (CU(A)) of subunit 2 and heme A of subunit 1 to the active site in subunit 1, a binuclear center (BNC) formed by heme A3 and copper B (CU(B)). The BNC reduces molecular oxygen to 2 water molecules using 4 electrons from cytochrome c in the IMS and 4 protons from the mitochondrial matrix. This Aotus azarae (Azara's night monkey) protein is Cytochrome c oxidase subunit 4 isoform 1, mitochondrial (COX4I1).